A 1036-amino-acid polypeptide reads, in one-letter code: Isoleucine--tRNA ligase (1036 aa).

Residues 46–56 (PFATGLPHYGH) carry the 'HIGH' region motif. A 'KMSKS' region motif is present at residues 589-593 (KMSKR). Lysine 592 is a binding site for ATP.

It belongs to the class-I aminoacyl-tRNA synthetase family. IleS type 2 subfamily. In terms of assembly, monomer. It depends on Zn(2+) as a cofactor.

It is found in the cytoplasm. It catalyses the reaction tRNA(Ile) + L-isoleucine + ATP = L-isoleucyl-tRNA(Ile) + AMP + diphosphate. Catalyzes the attachment of isoleucine to tRNA(Ile). As IleRS can inadvertently accommodate and process structurally similar amino acids such as valine, to avoid such errors it has two additional distinct tRNA(Ile)-dependent editing activities. One activity is designated as 'pretransfer' editing and involves the hydrolysis of activated Val-AMP. The other activity is designated 'posttransfer' editing and involves deacylation of mischarged Val-tRNA(Ile). This Chlamydia muridarum (strain MoPn / Nigg) protein is Isoleucine--tRNA ligase.